The sequence spans 169 residues: Cell division inhibitor SulA (169 aa).

Positions 106–112 are ftsZ binding; that stretch reads ALRTGNY. The tract at residues 162–169 is lon protease binding; sequence KIHSNLYH.

It belongs to the SulA family. As to quaternary structure, interacts with FtsZ. Post-translationally, is rapidly cleaved and degraded by the Lon protease once DNA damage is repaired.

Its function is as follows. Component of the SOS system and an inhibitor of cell division. Accumulation of SulA causes rapid cessation of cell division and the appearance of long, non-septate filaments. In the presence of GTP, binds a polymerization-competent form of FtsZ in a 1:1 ratio, thus inhibiting FtsZ polymerization and therefore preventing it from participating in the assembly of the Z ring. This mechanism prevents the premature segregation of damaged DNA to daughter cells during cell division. This chain is Cell division inhibitor SulA, found in Escherichia coli O45:K1 (strain S88 / ExPEC).